The sequence spans 1072 residues: RIMS-binding protein 2 (1072 aa).

The 68-residue stretch at 181-248 (GKVHLCVARY…PSNFVDFIQD (68 aa)) folds into the SH3 1 domain. Fibronectin type-III domains lie at 311-404 (VPYP…GKDV), 407-489 (APSQ…KKEA), and 503-604 (PPQD…VPPA). Disordered stretches follow at residues 597-681 (PDLL…APVS) and 713-800 (SAGQ…TSHN). Pro residues predominate over residues 599–615 (LLVPPAPHPRTAPPPKP). Over residues 620 to 635 (MDTKDQHLGPHVKVDE) the composition is skewed to basic and acidic residues. Residues 660–670 (GPGRRSPSPSR) are compositionally biased toward low complexity. A phosphoserine mark is found at S720 and S728. Composition is skewed to basic and acidic residues over residues 730–743 (EVKR…DFLK) and 754–765 (CHGDEYHTESSR). Positions 771–781 (DIMEEDEEELY) are enriched in acidic residues. S852 and S859 each carry phosphoserine. T861 is modified (phosphothreonine). SH3 domains are found at residues 868–936 (LPAR…EIHA) and 972–1039 (VPTR…EVPD). The segment at 1044–1072 (HLSDAPPHYSHDPPMRSKAKRKKSVHFTP) is disordered. A compositionally biased stretch (basic residues) spans 1060–1072 (SKAKRKKSVHFTP).

Belongs to the RIMBP family. As to quaternary structure, interacts with RIMS1, RIMS2, CACNA1D and CACNA1B, and potentially with other Ca(2+) channel alpha-1 isoforms.

It is found in the cell membrane. The protein resides in the synapse. Its function is as follows. Plays a role in the synaptic transmission as bifunctional linker that interacts simultaneously with RIMS1, RIMS2, CACNA1D and CACNA1B. This Mus musculus (Mouse) protein is RIMS-binding protein 2 (Rimbp2).